Reading from the N-terminus, the 218-residue chain is Fucoxanthin-chlorophyll a-c binding protein, chloroplastic (218 aa).

The transit peptide at 1-36 (MFYSAAVAALMVGSASAFLAPAQFNSVAKSSGALSM) directs the protein to the chloroplast.

This sequence belongs to the fucoxanthin chlorophyll protein family. As to quaternary structure, the LHC complex of chromophytic algae is composed of fucoxanthin, chlorophyll A and C bound non-covalently by fucoxanthin chlorophyll proteins (FCPs). The ratio of pigments in this LHC is; fucoxanthin: chlorophyll C: chlorophyll A; (0.6-1): (0.1-0.3): (1).

It localises to the plastid. The protein localises to the chloroplast thylakoid membrane. The light-harvesting complex (LHC) functions as a light receptor, it captures and delivers excitation energy to photosystems with which it is closely associated. Energy is transferred from the carotenoid and chlorophyll C (or B) to chlorophyll A and the photosynthetic reaction centers where it is used to synthesize ATP and reducing power. This chain is Fucoxanthin-chlorophyll a-c binding protein, chloroplastic, found in Chattonella marina var. antiqua (Red tide flagellate).